A 546-amino-acid polypeptide reads, in one-letter code: NRAMP-like transporter smf-2 (546 aa).

At 1–42 the chain is on the cytoplasmic side; the sequence is MPGFQNANISDLAPPAREKTFDDTIAVKIPEDEKNTWFSWRK. Residues 43-63 traverse the membrane as a helical segment; it reads LWAFTGPGFLMSIAYLDPGNI. Topologically, residues 64 to 70 are extracellular; the sequence is ESDLQAG. A helical transmembrane segment spans residues 71 to 91; it reads AQAEYKLLWVLLVSHIVGMLL. The Cytoplasmic portion of the chain corresponds to 92 to 119; sequence QRMSARLGVVSGKHMAEIAYDYYPLVPR. Residues 120–140 traverse the membrane as a helical segment; that stretch reads IILWLMIEIAIVCSDMQEVIG. Over 141–152 the chain is Extracellular; it reads TAIAIYLLSSGK. Residues 153–173 traverse the membrane as a helical segment; that stretch reads IPLLVGVLITILDTFTFLFID. Topologically, residues 174 to 181 are cytoplasmic; it reads RYGIRKLE. Residues 182 to 202 traverse the membrane as a helical segment; it reads FIFVALISTMAISFGYEFVVM. Residues 203–228 lie on the Extracellular side of the membrane; sequence KPVLTKVLTGTVVPWCSGCGKEEIIT. A helical membrane pass occupies residues 229 to 249; sequence AISIFGAVIMPHNFYLHSALV. Over 250-270 the chain is Cytoplasmic; that stretch reads KSRKVDRSSKTRIAEANKYFS. Residues 271–291 traverse the membrane as a helical segment; sequence IESAFALSVSFFINLFVLSVF. Residues 292–334 are Extracellular-facing; the sequence is ARGLYQKTNGDVNSMCLSHNDIPDSNVFPNNTSSVTVDLFQGG. An N-linked (GlcNAc...) asparagine glycan is attached at Asn321. A helical membrane pass occupies residues 335–355; that stretch reads IYLGCQFGLFAMIIWAIGIFA. At 356–386 the chain is on the cytoplasmic side; sequence AGQSSTMTGTYTGQFVMEGFVRISWPKWKRV. Residues 387-407 traverse the membrane as a helical segment; the sequence is LITRAVAITPTLILCIKAHGI. Residues 408-415 are Extracellular-facing; sequence KNLTGMND. Residue Asn409 is glycosylated (N-linked (GlcNAc...) asparagine). A helical membrane pass occupies residues 416 to 436; that stretch reads FLNCVQMVQLPFALIPMITFT. Topologically, residues 437-453 are cytoplasmic; sequence SSKRIMHNFRTSKPLQY. A helical transmembrane segment spans residues 454-474; it reads FSIICGIITIGINVYFIFQYV. Residues 475 to 483 are Extracellular-facing; sequence TENFGTGWL. The helical transmembrane segment at 484-504 threads the bilayer; that stretch reads IFVIIGPFTLLYIAFILYLAI. At 505 to 546 the chain is on the cytoplasmic side; it reads YCLVACELMNDTVNLPGFDFHRTLELDAPWITETFVVNDVYF.

Belongs to the NRAMP family. In terms of tissue distribution, expressed in dopaminergic neurons (at protein level). Primarily expressed in mc1, mc2 and mc3 epithelial cells of the pharynx and vpil-6 pharyngeal-intestinal valve cells displaying an anterior-posterior expression gradient. Expressed in gonad sheath cells.

The protein localises to the apical cell membrane. It localises to the cytoplasmic vesicle membrane. Probable divalent metal ion transporter which regulates Mn(2+) uptake. The chain is NRAMP-like transporter smf-2 from Caenorhabditis elegans.